Here is a 1080-residue protein sequence, read N- to C-terminus: Serine/threonine-protein kinase KIC1 (1080 aa).

Positions 23–276 constitute a Protein kinase domain; the sequence is FKRTEVIGRG…ADDLLKSKFI (254 aa). Residues 29 to 37 and K52 contribute to the ATP site; that span reads IGRGKFGVV. Residue D144 is the Proton acceptor of the active site. 4 disordered regions span residues 308–347, 615–760, 787–831, and 901–956; these read EGSIPENEPSKPSEAPKPSQNGGGDEAQKSIASNDNEIKR, KARS…LAPP, STLN…LQMP, and SQSI…NTGN. A compositionally biased stretch (low complexity) spans 312-326; sequence PENEPSKPSEAPKPS. The span at 615 to 626 shows a compositional bias: polar residues; that stretch reads KARSSTVTAGTP. Residues 627–638 show a composition bias toward low complexity; the sequence is SSSSSIQYKSPS. Residues 656–673 show a composition bias toward polar residues; it reads STITNQKLGSAVASNSGI. A compositionally biased stretch (low complexity) spans 674-689; that stretch reads SSTPNNSNNYNNNTDS. The span at 693–726 shows a compositional bias: polar residues; sequence RGSSGSNTANSTQMGITNPGNVTKLSTHKASSPS. S735 is modified (phosphoserine). Polar residues predominate over residues 743-756; that stretch reads SPTQNIGHNSTHTN. Residues 787–807 are compositionally biased toward low complexity; sequence STLNTISGNSSNNLTSSNYFS. A compositionally biased stretch (basic and acidic residues) spans 808-821; sequence NEKEGSRVNGDFKR. The segment covering 901-913 has biased composition (polar residues); sequence SQSISNRKNSSAS. The segment covering 918–956 has biased composition (low complexity); that stretch reads NILGSSVSGNVSGIGNNNVGSNNNSGPNNSVPLSANTGN.

The protein belongs to the protein kinase superfamily. Ser/Thr protein kinase family. As to quaternary structure, interacts with CDC31.

It catalyses the reaction L-seryl-[protein] + ATP = O-phospho-L-seryl-[protein] + ADP + H(+). It carries out the reaction L-threonyl-[protein] + ATP = O-phospho-L-threonyl-[protein] + ADP + H(+). Protein kinase involved in morphogenesis and cell integrity. This is Serine/threonine-protein kinase KIC1 (KIC1) from Saccharomyces cerevisiae (strain ATCC 204508 / S288c) (Baker's yeast).